The primary structure comprises 179 residues: SCAN domain-containing protein 1 (179 aa).

Residues 1–108 (MAATEPILAA…GSRLGPETFR (108 aa)) are disordered. Over residues 60-80 (AIPTPQAAASAAPELPLGPAP) the composition is skewed to low complexity. The SCAN box domain maps to 108-166 (RQRFRQFRYQDAAGPREAFRQLRELSRQWLRPDIRTKEQIVEMLVQEQLLAILPEAARA).

In terms of assembly, interacts with ZNF202.

Its subcellular location is the nucleus. May regulate transcriptional activity. The polypeptide is SCAN domain-containing protein 1 (SCAND1) (Pongo pygmaeus (Bornean orangutan)).